A 366-amino-acid polypeptide reads, in one-letter code: Isocitrate dehydrogenase [NAD] subunit alpha, mitochondrial (366 aa).

The transit peptide at 1–27 (MAGPAWISKVSRLLGAFHNPKQVTRGF) directs the protein to the mitochondrion. Position 77 is an N6-succinyllysine (Lys77). Phosphothreonine is present on Thr101. The substrate site is built by Arg115, Arg125, and Arg146. N6-acetyllysine is present on Lys223. Mg(2+) is bound by residues Asp233, Asp257, and Asp261. Position 343 is an N6-acetyllysine; alternate (Lys343). N6-succinyllysine; alternate is present on Lys343. Lys350 is modified (N6-succinyllysine).

The protein belongs to the isocitrate and isopropylmalate dehydrogenases family. As to quaternary structure, heterooligomer of subunits alpha (IDH3A), beta (IDH3B), and gamma (IDH3G) in the apparent ratio of 2:1:1. The heterodimer containing one IDH3A and one IDH3B subunit and the heterodimer containing one IDH3A and one IDH3G subunit assemble into a heterotetramer (which contains two subunits of IDH3A, one of IDH3B and one of IDH3G) and further into the heterooctamer. The cofactor is Mg(2+). It depends on Mn(2+) as a cofactor.

It localises to the mitochondrion. It carries out the reaction D-threo-isocitrate + NAD(+) = 2-oxoglutarate + CO2 + NADH. Its activity is regulated as follows. The heterotetramer and the heterodimer composed of IDH3A and IDH3G subunits can be allosterically activated by citrate (CIT) or/and ADP, and the two activators can act independently or synergistically. The heterodimer composed of IDH3A and IDH3B subunits cannot be allosterically regulated and the allosteric regulation of the heterotetramer is through the IDH3G subunit and not the IDH3B subunit. The IDH3G subunit contains the allosteric site which consists of a CIT-binding site and an ADP-binding site, and the binding of CIT and ADP causes conformational changes at the allosteric site which are transmitted to the active site in the catalytic subunit (IDH3A) through a cascade of conformational changes at the heterodimer interface, leading to stabilization of the isocitrate-binding at the active site and thus activation of the enzyme. ATP can activate the heterotetramer and the heterodimer composed of IDH3A and IDH3G subunits at low concentrations but inhibits their activities at high concentrations, whereas ATP exhibits only inhibitory effect on the heterodimer composed of IDH3A and IDH3B subunits. Catalytic subunit of the enzyme which catalyzes the decarboxylation of isocitrate (ICT) into alpha-ketoglutarate. The heterodimer composed of the alpha (IDH3A) and beta (IDH3B) subunits and the heterodimer composed of the alpha (IDH3A) and gamma (IDH3G) subunits, have considerable basal activity but the full activity of the heterotetramer (containing two subunits of IDH3A, one of IDH3B and one of IDH3G) requires the assembly and cooperative function of both heterodimers. This chain is Isocitrate dehydrogenase [NAD] subunit alpha, mitochondrial, found in Homo sapiens (Human).